The sequence spans 137 residues: DNA-binding protein H-NS (137 aa).

The DNA-binding element occupies 112 to 117; the sequence is QGRTPA.

Belongs to the histone-like protein H-NS family. Homodimer that oligomerizes on DNA into higher-order complexes that form bridges between disparate regions of DNA compacting it. Interacts with Hha, Cnu and StpA.

Its subcellular location is the cytoplasm. The protein localises to the nucleoid. In terms of biological role, a DNA-binding protein implicated in transcriptional repression and chromosome organization and compaction. Binds nucleation sites in AT-rich DNA and bridges them, forming higher-order nucleoprotein complexes and condensing the chromosome. As many horizontally transferred genes are AT-rich, it plays a central role in silencing foreign genes. A subset of genes are repressed by H-NS in association with other proteins. The chain is DNA-binding protein H-NS (hns) from Escherichia coli O6:H1 (strain CFT073 / ATCC 700928 / UPEC).